Here is a 237-residue protein sequence, read N- to C-terminus: Heme oxygenase (237 aa).

His-17 is a binding site for heme b.

This sequence belongs to the heme oxygenase family.

It is found in the plastid. The protein localises to the chloroplast. The enzyme catalyses heme b + 3 reduced [NADPH--hemoprotein reductase] + 3 O2 = biliverdin IXalpha + CO + Fe(2+) + 3 oxidized [NADPH--hemoprotein reductase] + 3 H2O + H(+). Its function is as follows. Catalyzes the opening of the heme ring with the release of iron. Key enzyme in the synthesis of the chromophoric part of the photosynthetic antennae. The sequence is that of Heme oxygenase (pbsA) from Guillardia theta (Cryptophyte).